Reading from the N-terminus, the 161-residue chain is MPSFDVVCEANMIEVKNAIEQSNKEISTRFDFKGSDARVEHKENEITAYADDDFKLGQVKDVLLSKMAKRNVDVRFLDYGKIEKIGGDKVKQVIKIKKGVSGDLSKKIVRLVKDSKIKVQASIQGDAVRITGGKRDDLQSVIAMLRKDVTDTPLDFNNFRD.

The protein belongs to the YajQ family.

Functionally, nucleotide-binding protein. The sequence is that of Nucleotide-binding protein Bxeno_A3642 from Paraburkholderia xenovorans (strain LB400).